Reading from the N-terminus, the 312-residue chain is Ribonuclease Z (312 aa).

7 residues coordinate Zn(2+): H62, H64, D66, H67, H144, D215, and H273. The Proton acceptor role is filled by D66.

Belongs to the RNase Z family. As to quaternary structure, homodimer. Requires Zn(2+) as cofactor.

The catalysed reaction is Endonucleolytic cleavage of RNA, removing extra 3' nucleotides from tRNA precursor, generating 3' termini of tRNAs. A 3'-hydroxy group is left at the tRNA terminus and a 5'-phosphoryl group is left at the trailer molecule.. Zinc phosphodiesterase, which displays some tRNA 3'-processing endonuclease activity. Probably involved in tRNA maturation, by removing a 3'-trailer from precursor tRNA. This is Ribonuclease Z from Prochlorococcus marinus (strain MIT 9215).